Here is a 146-residue protein sequence, read N- to C-terminus: Large-conductance mechanosensitive channel (146 aa).

The next 3 helical transmembrane spans lie at Val-21–Ile-41, Ile-44–Gly-64, and Gly-83–Val-103.

Belongs to the MscL family. As to quaternary structure, homopentamer.

It is found in the cell inner membrane. Functionally, channel that opens in response to stretch forces in the membrane lipid bilayer. May participate in the regulation of osmotic pressure changes within the cell. The chain is Large-conductance mechanosensitive channel from Cereibacter sphaeroides (strain ATCC 17029 / ATH 2.4.9) (Rhodobacter sphaeroides).